Consider the following 619-residue polypeptide: Mitogen-activated protein kinase kinase kinase 2 (619 aa).

The interval 25–45 (LSLQETRKAKSSSPKKQNDVR) is disordered. S26 bears the Phosphoserine mark. Residues 43–122 (DVRVKFEHRG…KSLKILLVIN (80 aa)) enclose the PB1 domain. Phosphoserine occurs at positions 153, 159, and 164. Disordered regions lie at residues 154–173 (IIGP…IPDE), 201–248 (LDPL…QEFS), and 289–355 (RTQG…APTN). Low complexity predominate over residues 203 to 219 (PLSLSSPENSGSGSCPS). Phosphoserine is present on residues S239, S297, S311, S331, S344, and S349. A compositionally biased stretch (polar residues) spans 290-299 (TQGTSLRSPV). A compositionally biased stretch (low complexity) spans 300-315 (SFSPTDHSLSTSSGSS). The span at 322-332 (DDSRIRRRGSD) shows a compositional bias: basic and acidic residues. The region spanning 357-617 (RLGKLLGQGA…DELLRHMFVH (261 aa)) is the Protein kinase domain. Residues 362–371 (LGQGAFGRVY) and K385 each bind ATP. D483 serves as the catalytic Proton acceptor.

The protein belongs to the protein kinase superfamily. STE Ser/Thr protein kinase family. MAP kinase kinase kinase subfamily. In terms of assembly, interacts with PKN2; the interaction activates PKN2 kinase activity in a MAP3K2-independent kinase activity. Self-associates. Binds both upstream activators and downstream substrates in multimolecular complexes. Interacts (via the kinase catalytic domain) with STK38. Interacts with XIAP/BIRC4. Mg(2+) is required as a cofactor. Post-translationally, autophosphorylated. In terms of processing, ubiquitination by XIAP/BIRC4 does not lead to proteasomal degradation.

The protein resides in the cytoplasm. It is found in the nucleus. It catalyses the reaction L-seryl-[protein] + ATP = O-phospho-L-seryl-[protein] + ADP + H(+). The enzyme catalyses L-threonyl-[protein] + ATP = O-phospho-L-threonyl-[protein] + ADP + H(+). Activated by phosphorylation on Thr-524. Component of a protein kinase signal transduction cascade. Regulates the JNK and ERK5 pathways by phosphorylating and activating MAP2K5 and MAP2K7. Plays a role in caveolae kiss-and-run dynamics. The polypeptide is Mitogen-activated protein kinase kinase kinase 2 (MAP3K2) (Homo sapiens (Human)).